The following is a 59-amino-acid chain: Large ribosomal subunit protein uL30 (59 aa).

It belongs to the universal ribosomal protein uL30 family. Part of the 50S ribosomal subunit.

This Rhodococcus erythropolis (strain PR4 / NBRC 100887) protein is Large ribosomal subunit protein uL30.